The primary structure comprises 983 residues: MDRKSSVTIDLLRLGVMDTDAASANHHRIAENIGADPNRLADWEHHLETCCDPDLALNVLAELAQDSAQCLGEVLDHDASACRLVRLLGASSELGRHLIAHPDDLAEVIRDPVRLGHDEICDDLLEVVGAHKEGEFTVAGTPTGPASDRLRLANRRHLVRIASRDVSADDPTEIIEDVAAELADLADGIVTAALALARADCPDHADARLAIIAMGKCGAQELNYISDVDVMYVAEPANDDVSGASAVTIATKLAASVARMCSAHSGAGSIWQVDAALRPEGNAGPLVRTMDSMRTYYEKWAKNWEFQALLKARPMAGDLDLGQRFVEMVSPMVWQVGEAEGFVPETRAMRTRVVSLIAAKNKGREIKLGAGGLRDVEFTAQLLQLVHGRQDESLRVRATLPALRALAAGGYISRGAAERLKEAYRLERVMEHRVQMFRLRRTHLLPDDEDGLRRLARAVGLRTADEVRRVWTATSKAVLRAHGQVFYSPVVEAVARIPTQDLRMSAEAAKVRLSALGFHDEDAGLRHIEALTSGTSRAVRIQTALMPAMLAWLADGPSPDHGLLAFRQVSEALGESPWYLRALRDEGAMAQRLAVVLSTSRYAVDVLTRAPETVQVLVDDDLTPLSREDLARQMNAVARRHHDVEEAVGAIRAVRRRKLFRILVADILNVTGIRRIGQALTDLTGATIDAALTAVSREVEDAPPIGIVAMGRWGGQELSYASDADCLFVVGDGPGVGEKALKIVTKLRNLLGKHGADPAVVLDADLRPEGRSGPMVRSLESYRKYYGKWSSTWESQALLRASHGAGDRELTNELLEYVDQVRYPADGLTGSQLAEIRKLKARMESERIPRGVDPRRHLKLGPGGLSDIEWTAQIIQLQHAGHDPALRTTSTIDALNAALAAGYIDEGQHAKLCDSWLAASRLRNAIMVVRGRPSDVIPSDSTDLDVIAKASGMGQGASEHLVEDHLRHCRRASRVVDAVFWNQ.

The interval 1–490 is adenylyl removase; that stretch reads MDRKSSVTID…AHGQVFYSPV (490 aa). Residues 496–983 form an adenylyl transferase region; that stretch reads RIPTQDLRMS…RVVDAVFWNQ (488 aa).

The protein belongs to the GlnE family. It depends on Mg(2+) as a cofactor.

It carries out the reaction [glutamine synthetase]-O(4)-(5'-adenylyl)-L-tyrosine + phosphate = [glutamine synthetase]-L-tyrosine + ADP. The enzyme catalyses [glutamine synthetase]-L-tyrosine + ATP = [glutamine synthetase]-O(4)-(5'-adenylyl)-L-tyrosine + diphosphate. Its function is as follows. Involved in the regulation of glutamine synthetase GlnA, a key enzyme in the process to assimilate ammonia. When cellular nitrogen levels are high, the C-terminal adenylyl transferase (AT) inactivates GlnA by covalent transfer of an adenylyl group from ATP to specific tyrosine residue of GlnA, thus reducing its activity. Conversely, when nitrogen levels are low, the N-terminal adenylyl removase (AR) activates GlnA by removing the adenylyl group by phosphorolysis, increasing its activity. The regulatory region of GlnE binds the signal transduction protein PII (GlnB) which indicates the nitrogen status of the cell. This is Bifunctional glutamine synthetase adenylyltransferase/adenylyl-removing enzyme from Cutibacterium acnes (strain DSM 16379 / KPA171202) (Propionibacterium acnes).